The primary structure comprises 260 residues: tRNA pseudouridine synthase C (260 aa).

Aspartate 54 is an active-site residue.

It belongs to the pseudouridine synthase RluA family.

It catalyses the reaction uridine(65) in tRNA = pseudouridine(65) in tRNA. Its function is as follows. Responsible for synthesis of pseudouridine from uracil-65 in transfer RNAs. This chain is tRNA pseudouridine synthase C (truC), found in Salmonella typhimurium (strain LT2 / SGSC1412 / ATCC 700720).